The sequence spans 280 residues: Virginiamycin B lyase (280 aa).

His215 is a binding site for substrate. Glu254 serves as a coordination point for Mg(2+). Catalysis depends on His256, which acts as the Proton acceptor. Residue Glu271 coordinates Mg(2+).

This sequence belongs to the Vgb family. As to quaternary structure, monomer. Mg(2+) serves as cofactor.

Inactivates the type B streptogramin antibiotics by linearizing the lactone ring at the ester linkage, generating a free phenylglycine carboxylate and converting the threonyl moiety into 2-amino-butenoic acid. The sequence is that of Virginiamycin B lyase from Mycobacterium sp. (strain KMS).